A 341-amino-acid polypeptide reads, in one-letter code: MPIRDQIIQIVRGHDLSEDQAAEAMEEIMTGMATPAQVAALLTALHLKGETDAEIAGMARVMRAKAIPVHFDAPLLDTCGTGGDGAGTFNISTTAAFIAAGAGAIVAKHGNRAMSSVCGSADVLEGLGVNIELDAASVARCLDQAGIGFMFAQKFHPAMRFVGPVRREIGIRTVFNILGPLSNPAHARHQVLGVADPALAEKMARALHLLGTQHALVIHGHGGLDELTLSGPNLVIDVRAGHTPRRYEVTAADLGLAPAPREALRGGDVSVNVAIVRGILSGEDQSARRDVALLNAAAALVAADRAADLRDGLHQARHSLESGAALARLERLITVSRGGEG.

Residues Gly-80, 83–84 (GD), Thr-88, 90–93 (NIST), 108–116 (KHGNRAMSS), and Ser-120 contribute to the 5-phospho-alpha-D-ribose 1-diphosphate site. Gly-80 contacts anthranilate. Residue Ser-92 participates in Mg(2+) binding. Asn-111 is an anthranilate binding site. Arg-166 lines the anthranilate pocket. Residues Asp-225 and Glu-226 each coordinate Mg(2+).

The protein belongs to the anthranilate phosphoribosyltransferase family. In terms of assembly, homodimer. Mg(2+) is required as a cofactor.

The enzyme catalyses N-(5-phospho-beta-D-ribosyl)anthranilate + diphosphate = 5-phospho-alpha-D-ribose 1-diphosphate + anthranilate. It functions in the pathway amino-acid biosynthesis; L-tryptophan biosynthesis; L-tryptophan from chorismate: step 2/5. In terms of biological role, catalyzes the transfer of the phosphoribosyl group of 5-phosphorylribose-1-pyrophosphate (PRPP) to anthranilate to yield N-(5'-phosphoribosyl)-anthranilate (PRA). This chain is Anthranilate phosphoribosyltransferase, found in Roseiflexus sp. (strain RS-1).